Reading from the N-terminus, the 124-residue chain is MEPFSPTICETVPLYPQWNGLIAGHLETSDISETFMSFVFYATTINVIIELKKLLILIINGGNTRGAITSRDIRYLTPFKICTCARFKKKKGSRNRNEIAHFSFRFRRFCKSLSRYTRVLLMFM.

This is an uncharacterized protein from Saccharomyces cerevisiae (strain ATCC 204508 / S288c) (Baker's yeast).